We begin with the raw amino-acid sequence, 473 residues long: Ribulose bisphosphate carboxylase large chain (473 aa).

Asparagine 116 and threonine 166 together coordinate substrate. Lysine 168 acts as the Proton acceptor in catalysis. Lysine 170 serves as a coordination point for substrate. The Mg(2+) site is built by lysine 194, aspartate 196, and glutamate 197. N6-carboxylysine is present on lysine 194. Histidine 287 acts as the Proton acceptor in catalysis. Substrate contacts are provided by arginine 288, histidine 320, and serine 372.

This sequence belongs to the RuBisCO large chain family. Type I subfamily. In terms of assembly, heterohexadecamer of 8 large chains and 8 small chains. Mg(2+) is required as a cofactor.

The catalysed reaction is 2 (2R)-3-phosphoglycerate + 2 H(+) = D-ribulose 1,5-bisphosphate + CO2 + H2O. The enzyme catalyses D-ribulose 1,5-bisphosphate + O2 = 2-phosphoglycolate + (2R)-3-phosphoglycerate + 2 H(+). In terms of biological role, ruBisCO catalyzes two reactions: the carboxylation of D-ribulose 1,5-bisphosphate, the primary event in carbon dioxide fixation, as well as the oxidative fragmentation of the pentose substrate. Both reactions occur simultaneously and in competition at the same active site. The polypeptide is Ribulose bisphosphate carboxylase large chain (Rhodobacter capsulatus (strain ATCC BAA-309 / NBRC 16581 / SB1003)).